A 456-amino-acid chain; its full sequence is Yersinopine synthase (456 aa).

NADP(+) contacts are provided by residues 12–15 (AGPA), 35–40 (NRPSTK), and Thr154. His242 acts as the Proton donor/acceptor in catalysis.

This sequence belongs to the staphylopine dehydrogenase family. As to quaternary structure, homodimer.

The catalysed reaction is yersinopine + NADP(+) + H2O = (2S)-2-amino-4-{[(1S)-1-carboxy-2-(1H-imidazol-4-yl)ethyl]amino}butanoate + pyruvate + NADPH + H(+). In terms of biological role, catalyzes the NADPH-dependent reductive condensation of pyruvate to the intermediate formed by the adjacently encoded enzyme y2836, namely (2S)-2-amino-4-{[(1S)-1-carboxy-2-(1H-imidazol-4-yl)ethyl]amino}butanoate, leading to the production of yersinopine. This is the last step in the biosynthesis of the metallophore yersinopine, which is involved in metal acquisition and thus enables bacterial growth inside the host, where metal access is limited. Therefore, this enzyme probably contributes to Yersinia virulence. Cannot use alpha-ketoglutarate in place of pyruvate, and displays only poor efficiency with oxaloacetate and glyoxylate. This Yersinia pestis protein is Yersinopine synthase.